The primary structure comprises 495 residues: NADH-ubiquinone oxidoreductase chain 4 (495 aa).

11 helical membrane-spanning segments follow: residues 9–29 (YSNL…PLFI), 39–59 (LIGL…RIQF), 89–109 (ISLF…SVGW), 139–159 (LLLF…IIGV), 173–193 (FFLY…LILF), 214–234 (IFLW…VPVH), 272–292 (FPEA…IAII), 313–333 (VAHM…GIGG), 335–355 (ILPM…VGVL), 367–387 (YGGL…FTLA), and 413–433 (LVAT…LWLY).

The protein belongs to the complex I subunit 4 family.

Its subcellular location is the mitochondrion membrane. It catalyses the reaction a ubiquinone + NADH + 5 H(+)(in) = a ubiquinol + NAD(+) + 4 H(+)(out). Functionally, core subunit of the mitochondrial membrane respiratory chain NADH dehydrogenase (Complex I) that is believed to belong to the minimal assembly required for catalysis. Complex I functions in the transfer of electrons from NADH to the respiratory chain. The immediate electron acceptor for the enzyme is believed to be ubiquinone. In Brassica campestris (Field mustard), this protein is NADH-ubiquinone oxidoreductase chain 4 (ND4).